The chain runs to 264 residues: Catechol O-methyltransferase B (264 aa).

An N-terminal signal peptide occupies residues 1–29 (MLGVLLCWCLGASVLLYVLYSWLIPAAVQ). Asparagine 31 is a glycosylation site (N-linked (GlcNAc...) asparagine). Valine 92, serine 122, glutamate 140, and aspartate 191 together coordinate S-adenosyl-L-methionine. Aspartate 191 is a binding site for Mg(2+). A substrate-binding site is contributed by lysine 194. Residues aspartate 219 and asparagine 220 each contribute to the Mg(2+) site. Positions 220 and 249 each coordinate substrate.

The protein belongs to the class I-like SAM-binding methyltransferase superfamily. Cation-dependent O-methyltransferase family. The cofactor is Mg(2+). In terms of tissue distribution, strongly expressed in eye, diencephalon, spinal cord, hindbrain, liver, kidney and telencephalon. Also detected at very low levels in muscle, spleen, anterior gut and heart. In eye, expressed strongly in retina. In brain, expressed in the central part of the telencephalon, the periventricular gray zone of the optic tectum, the periglomerular nucleus, the olfactory bulb, and the region adjacent to the diencephalic ventricle in the hypothalamus. Expressed in gill, with strongest expression in gill filaments nearest the gill arch, and in esophageal epithelium.

Its subcellular location is the secreted. It carries out the reaction a catechol + S-adenosyl-L-methionine = a guaiacol + S-adenosyl-L-homocysteine + H(+). In terms of biological role, catalyzes the O-methylation, and thereby the inactivation, of catecholamine neurotransmitters and catechol hormones. This Danio rerio (Zebrafish) protein is Catechol O-methyltransferase B.